The sequence spans 139 residues: Plastocyanin (139 aa).

The N-terminal stretch at 1 to 34 (MKLIAASLRRLSLAVLTVLLVVSSFAVFTPSAAA) is a signal peptide. The region spanning 35 to 135 (ETYTVKLGSD…HRGAGMVGKI (101 aa)) is the Plastocyanin-like domain. The Cu cation site is built by His-73, Cys-123, His-126, and Met-131.

Belongs to the plastocyanin family. Cu(2+) serves as cofactor.

The protein resides in the cellular thylakoid membrane. In terms of biological role, participates in electron transfer between P700 and the cytochrome b6-f complex in photosystem I. In Trichormus variabilis (strain ATCC 29413 / PCC 7937) (Anabaena variabilis), this protein is Plastocyanin (petE).